A 335-amino-acid chain; its full sequence is Tetraacyldisaccharide 4'-kinase (335 aa).

58–65 contributes to the ATP binding site; it reads VVGGSGKT.

It belongs to the LpxK family.

The enzyme catalyses a lipid A disaccharide + ATP = a lipid IVA + ADP + H(+). The protein operates within glycolipid biosynthesis; lipid IV(A) biosynthesis; lipid IV(A) from (3R)-3-hydroxytetradecanoyl-[acyl-carrier-protein] and UDP-N-acetyl-alpha-D-glucosamine: step 6/6. Its function is as follows. Transfers the gamma-phosphate of ATP to the 4'-position of a tetraacyldisaccharide 1-phosphate intermediate (termed DS-1-P) to form tetraacyldisaccharide 1,4'-bis-phosphate (lipid IVA). In Hydrogenovibrio crunogenus (strain DSM 25203 / XCL-2) (Thiomicrospira crunogena), this protein is Tetraacyldisaccharide 4'-kinase.